The primary structure comprises 249 residues: Small ribosomal subunit protein eS6 (249 aa).

Positions 216–229 (RMKEAKEKRQEQIA) are enriched in basic and acidic residues. The disordered stretch occupies residues 216-249 (RMKEAKEKRQEQIAKRRRLSSLRASTSKSESSQK). A phosphoserine mark is found at Ser-235, Ser-236, Ser-240, Ser-244, and Ser-247. Positions 236–249 (SLRASTSKSESSQK) are enriched in low complexity.

The protein belongs to the eukaryotic ribosomal protein eS6 family. Component of the small ribosomal subunit. Part of the small subunit (SSU) processome, composed of more than 70 proteins and the RNA chaperone small nucleolar RNA (snoRNA) U3. In terms of processing, ribosomal protein S6 is the major substrate of protein kinases in eukaryote ribosomes. The phosphorylation is stimulated by growth factors, tumor promoting agents, and mitogens. It is dephosphorylated at growth arrest.

It localises to the cytoplasm. Its subcellular location is the nucleus. The protein localises to the nucleolus. Component of the 40S small ribosomal subunit. Plays an important role in controlling cell growth and proliferation through the selective translation of particular classes of mRNA. Part of the small subunit (SSU) processome, first precursor of the small eukaryotic ribosomal subunit. During the assembly of the SSU processome in the nucleolus, many ribosome biogenesis factors, an RNA chaperone and ribosomal proteins associate with the nascent pre-rRNA and work in concert to generate RNA folding, modifications, rearrangements and cleavage as well as targeted degradation of pre-ribosomal RNA by the RNA exosome. The polypeptide is Small ribosomal subunit protein eS6 (RPS6) (Gallus gallus (Chicken)).